The sequence spans 353 residues: Photosystem II protein D1 (353 aa).

Threonine 2 carries the N-acetylthreonine modification. The residue at position 2 (threonine 2) is a Phosphothreonine. Helical transmembrane passes span 29-46, 118-133, and 142-156; these read YIGWFGVLMIPTLLTATS, HFLLGVACYMGREWEL, and WIAVAYSAPVAAATA. Residue histidine 118 participates in chlorophyll a binding. Residue tyrosine 126 coordinates pheophytin a. 2 residues coordinate [CaMn4O5] cluster: aspartate 170 and glutamate 189. A helical transmembrane segment spans residues 197 to 218; the sequence is FHMLGVAGVFGGSLFSAMHGSL. Position 198 (histidine 198) interacts with chlorophyll a. Residues histidine 215 and 264–265 each bind a quinone; that span reads SF. Fe cation is bound at residue histidine 215. Fe cation is bound at residue histidine 272. The chain crosses the membrane as a helical span at residues 274-288; that stretch reads FLAAWPVVGIWFTAL. [CaMn4O5] cluster-binding residues include histidine 332, glutamate 333, aspartate 342, and alanine 344. A propeptide spanning residues 345 to 353 is cleaved from the precursor; it reads ALEVPSING.

The protein belongs to the reaction center PufL/M/PsbA/D family. PSII is composed of 1 copy each of membrane proteins PsbA, PsbB, PsbC, PsbD, PsbE, PsbF, PsbH, PsbI, PsbJ, PsbK, PsbL, PsbM, PsbT, PsbX, PsbY, PsbZ, Psb30/Ycf12, at least 3 peripheral proteins of the oxygen-evolving complex and a large number of cofactors. It forms dimeric complexes. The D1/D2 heterodimer binds P680, chlorophylls that are the primary electron donor of PSII, and subsequent electron acceptors. It shares a non-heme iron and each subunit binds pheophytin, quinone, additional chlorophylls, carotenoids and lipids. D1 provides most of the ligands for the Mn4-Ca-O5 cluster of the oxygen-evolving complex (OEC). There is also a Cl(-1) ion associated with D1 and D2, which is required for oxygen evolution. The PSII complex binds additional chlorophylls, carotenoids and specific lipids. is required as a cofactor. Post-translationally, tyr-161 forms a radical intermediate that is referred to as redox-active TyrZ, YZ or Y-Z. In terms of processing, C-terminally processed by CTPA; processing is essential to allow assembly of the oxygen-evolving complex and thus photosynthetic growth.

The protein resides in the plastid. The protein localises to the chloroplast thylakoid membrane. The enzyme catalyses 2 a plastoquinone + 4 hnu + 2 H2O = 2 a plastoquinol + O2. Its function is as follows. Photosystem II (PSII) is a light-driven water:plastoquinone oxidoreductase that uses light energy to abstract electrons from H(2)O, generating O(2) and a proton gradient subsequently used for ATP formation. It consists of a core antenna complex that captures photons, and an electron transfer chain that converts photonic excitation into a charge separation. The D1/D2 (PsbA/PsbD) reaction center heterodimer binds P680, the primary electron donor of PSII as well as several subsequent electron acceptors. In Agrostis stolonifera (Creeping bentgrass), this protein is Photosystem II protein D1.